The following is a 3801-amino-acid chain: Lysosomal-trafficking regulator (3801 aa).

The interval 148 to 173 is disordered; that stretch reads KITHRYSVRDARKTQLSTSDSEANSD. Serine 164 carries the post-translational modification Phosphoserine. Position 165 is a phosphothreonine (threonine 165). Position 166 is a phosphoserine (serine 166). The stretch at 662 to 700 is one WD 1 repeat; the sequence is ELSSSLSSPSYRFQGILPSSGSEDLLWKWDALKAYQNFV. Basic and acidic residues predominate over residues 1181–1190; sequence AMTEKSHQSA. 2 disordered regions span residues 1181-1203 and 1221-1256; these read AMTE…FSEE and YEAD…SPND. A compositionally biased stretch (acidic residues) spans 1221–1238; the sequence is YEADSESNPEDGETQDDG. The segment covering 1246-1256 has biased composition (polar residues); it reads EGFSASSSPND. A phosphoserine mark is found at serine 1509 and serine 1510. A WD 2 repeat occupies 1582–1626; sequence SQENIFLPSKWQHLVLTYLQQPQGKRRIHGKISIWVSGQRKPDVT. Phosphoserine occurs at positions 2105, 2124, 2213, 2217, and 2264. Over residues 2205-2215 the composition is skewed to basic and acidic residues; that stretch reads KQLGAEPRSED. The disordered stretch occupies residues 2205-2224; that stretch reads KQLGAEPRSEDDSPGDESCP. A BEACH-type PH domain is found at 3009 to 3115; that stretch reads AASESIRVNR…VRDDVYHNIL (107 aa). Residues 3120–3422 form the BEACH domain; the sequence is PNLLEYGNIT…QLFHMAHVSR (303 aa). WD repeat units follow at residues 3563-3602, 3614-3653, 3656-3699, 3700-3744, and 3749-3788; these read SQQY…STPS, GHTE…YVQS, GHKS…VGHV, HCRE…PVRE, and KSNK…RLKQ.

Interacts with CPAP, LIP8 and ZNF521. As to expression, abundantly expressed in adult and fetal thymus, peripheral blood leukocytes, bone marrow and several regions of the adult brain.

Its subcellular location is the cytoplasm. Functionally, adapter protein that regulates and/or fission of intracellular vesicles such as lysosomes. Might regulate trafficking of effectors involved in exocytosis. In cytotoxic T-cells and natural killer (NK) cells, has role in the regulation of size, number and exocytosis of lytic granules. In macrophages and dendritic cells, regulates phagosome maturation by controlling the conversion of early phagosomal compartments into late phagosomes. In macrophages and dendritic cells, specifically involved in TLR3- and TLR4-induced production of pro-inflammatory cytokines by regulating the endosomal TLR3- TICAM1/TRIF and TLR4- TICAM1/TRIF signaling pathways. This is Lysosomal-trafficking regulator (LYST) from Homo sapiens (Human).